We begin with the raw amino-acid sequence, 382 residues long: MPQCECPEPLSAVQLKRLEEHKYSAAGRSLFEPPCQIYWNWLVQQIPTWVAPNTLTTIGLVINVITTVILVYYSPTATEEVPGWAFFLSALGLFIYQSLDAIDGKQARRTNSSSALGELFDHGCDAVSTVFVAVGTCICCGIGAYPNWMFFCGFVGMFMFFCAHWQTYVSGTLRFGLVDVTEVQIAIIIMYLLTAFTGVSFWEMRVPVLGVNLQTFPILGIIGGFLYSTYNYFFVIMNGGVGKNGSTVADTSVLTPGLHIGLILTLAFIIFKKSSSHLFEHHPCLYVLTFGMVIAKISNKLVVAHMTKSELHLQDTAFIGPGLLFLNQYFNSYIDEHIVLWIAMVLSLVDLVRYCTAVCLQIASHLRIRVFSISPQGHAHKD.

Residues 1 to 51 are Cytoplasmic-facing; that stretch reads MPQCECPEPLSAVQLKRLEEHKYSAAGRSLFEPPCQIYWNWLVQQIPTWVA. Residues 52-72 form a helical membrane-spanning segment; it reads PNTLTTIGLVINVITTVILVY. Residue Asn-53 participates in CDP-choline binding. Topologically, residues 73 to 82 are lumenal; the sequence is YSPTATEEVP. The helical transmembrane segment at 83 to 107 threads the bilayer; the sequence is GWAFFLSALGLFIYQSLDAIDGKQA. The Mg(2+) site is built by Asp-100 and Asp-103. Arg-108 lines the CDP-choline pocket. Over 108–114 the chain is Cytoplasmic; that stretch reads RRTNSSS. Residues 115 to 139 form a helical membrane-spanning segment; it reads ALGELFDHGCDAVSTVFVAVGTCIC. Asp-121 is a Mg(2+) binding site. His-122 serves as the catalytic Proton acceptor. Asp-125 lines the Mg(2+) pocket. Topologically, residues 140–149 are lumenal; it reads CGIGAYPNWM. Residues 150–168 form a helical membrane-spanning segment; that stretch reads FFCGFVGMFMFFCAHWQTY. Residues 169–179 lie on the Cytoplasmic side of the membrane; the sequence is VSGTLRFGLVD. A helical membrane pass occupies residues 180-196; that stretch reads VTEVQIAIIIMYLLTAF. The Lumenal portion of the chain corresponds to 197 to 211; sequence TGVSFWEMRVPVLGV. The chain crosses the membrane as a helical span at residues 212 to 237; sequence NLQTFPILGIIGGFLYSTYNYFFVIM. The Cytoplasmic segment spans residues 238 to 254; that stretch reads NGGVGKNGSTVADTSVL. A helical transmembrane segment spans residues 255–270; that stretch reads TPGLHIGLILTLAFII. The Lumenal segment spans residues 271 to 282; the sequence is FKKSSSHLFEHH. Residues 283–305 form a helical membrane-spanning segment; it reads PCLYVLTFGMVIAKISNKLVVAH. Residues 306–318 lie on the Cytoplasmic side of the membrane; that stretch reads MTKSELHLQDTAF. A helical membrane pass occupies residues 319–328; the sequence is IGPGLLFLNQ. Residues 329–335 are Lumenal-facing; sequence YFNSYID. The chain crosses the membrane as a helical span at residues 336 to 365; it reads EHIVLWIAMVLSLVDLVRYCTAVCLQIASH. The Cytoplasmic segment spans residues 366-382; the sequence is LRIRVFSISPQGHAHKD.

This sequence belongs to the CDP-alcohol phosphatidyltransferase class-I family. Mg(2+) serves as cofactor. Mn(2+) is required as a cofactor.

Its subcellular location is the golgi apparatus membrane. The enzyme catalyses CDP-choline + a 1,2-diacyl-sn-glycerol = a 1,2-diacyl-sn-glycero-3-phosphocholine + CMP + H(+). It catalyses the reaction 1-octadecanoyl-2-(5Z,8Z,11Z,14Z-eicosatetraenoyl)-sn-glycerol + CDP-choline = 1-octadecanoyl-2-(5Z,8Z,11Z,14Z-eicosatetraenoyl)-sn-glycero-3-phosphocholine + CMP + H(+). It carries out the reaction 1-hexadecanoyl-2-(9Z-octadecenoyl)-sn-glycerol + CDP-choline = 1-hexadecanoyl-2-(9Z-octadecenoyl)-sn-glycero-3-phosphocholine + CMP + H(+). The catalysed reaction is 1-hexadecanoyl-2-(4Z,7Z,10Z,13Z,16Z,19Z-docosahexaenoyl)-sn-glycerol + CDP-choline = 1-hexadecanoyl-2-(4Z,7Z,10Z,13Z,16Z,19Z-docosahexaenoyl)-sn-glycero-3-phosphocholine + CMP + H(+). The enzyme catalyses 1,2-dioctanoyl-sn-glycerol + CDP-choline = 1,2-dioctanoyl-sn-glycero-3-phosphocholine + CMP + H(+). Its pathway is phospholipid metabolism; phosphatidylcholine biosynthesis; phosphatidylcholine from phosphocholine: step 2/2. In terms of biological role, catalyzes the final step of de novo phosphatidylcholine (PC) synthesis, i.e. the transfer of choline phosphate from CDP-choline to the free hydroxyl of a diacylglycerol (DAG), producing a PC. It thereby plays a central role in the formation and maintenance of vesicular membranes. This chain is Cholinephosphotransferase 1 (chpt1), found in Danio rerio (Zebrafish).